A 187-amino-acid polypeptide reads, in one-letter code: UPF0200 protein PYRAB09750 (187 aa).

7–14 (GMPGSGKG) contacts ATP.

It belongs to the UPF0200 family.

The sequence is that of UPF0200 protein PYRAB09750 from Pyrococcus abyssi (strain GE5 / Orsay).